The following is a 462-amino-acid chain: Calcitonin gene-related peptide type 1 receptor (462 aa).

Residues 1 to 22 form the signal peptide; it reads MEKKYILYFLFLLPFFMILVIA. Residues 23 to 140 are Extracellular-facing; it reads ETEEENPDDL…NTHEKVQTAL (118 aa). 3 disulfide bridges follow: C49-C75, C66-C106, and C89-C128. N67, N119, and N124 each carry an N-linked (GlcNAc...) asparagine glycan. Residues 141–165 form a helical membrane-spanning segment; the sequence is NLFYLTIIGHGLSIASLLISLGIFF. Over 166–176 the chain is Cytoplasmic; sequence YFKSLSCQRIT. Residues 177-199 traverse the membrane as a helical segment; sequence LHKNLFFSFVCNSIVTIIHLTAV. Topologically, residues 200 to 210 are extracellular; sequence ANNQALVATNP. Residues 211-239 traverse the membrane as a helical segment; sequence VSCKVFQFIHLYLMGCNYFWMLCEGIYLH. Residues 240 to 253 lie on the Cytoplasmic side of the membrane; the sequence is TLIVVAVFAEKQHL. A helical transmembrane segment spans residues 254–274; the sequence is MWYYFLGWGFPLIPACIHAVA. Residues 275 to 290 are Extracellular-facing; it reads RRLYYNDNCWISSDTH. A required for RAMP3 interaction region spans residues 289–290; it reads TH. The helical transmembrane segment at 291–315 threads the bilayer; sequence LLYIIHGPICAALLVNLFFLLNIVR. Residues 316 to 330 lie on the Cytoplasmic side of the membrane; the sequence is VLITKLKVTHQAESN. The chain crosses the membrane as a helical span at residues 331–352; that stretch reads LYMKAVRATLILVPLLGIEFVL. Over 353–367 the chain is Extracellular; sequence IPWRPEGKIAEEVYD. The chain crosses the membrane as a helical span at residues 368-388; it reads YIMHILVHYQGLLVSTIYCFF. The Cytoplasmic portion of the chain corresponds to 389-462; that stretch reads NGEVQAILRR…IVIKPEKLYD (74 aa). Phosphoserine occurs at positions 421 and 446.

It belongs to the G-protein coupled receptor 2 family. In terms of assembly, heterodimer of CALCRL and RAMP1; the receptor complex functions as CGRP receptor. Heterodimer of CALCRL and RAMP2 or CALCRL and RAMP3; the complexes function as adrenomedullin receptor. Detected in lung and coronary artery.

It is found in the cell membrane. G protein-coupled receptor which specificity is determined by its interaction with receptor-activity-modifying proteins (RAMPs). Together with RAMP1, form the receptor complex for calcitonin-gene-related peptides CALCA/CGRP1 and CALCB/CGRP2. Together with RAMP2 or RAMP3, function as receptor complexes for adrenomedullin (ADM and ADM2). Ligand binding causes a conformation change that triggers signaling via guanine nucleotide-binding proteins (G proteins) and modulates the activity of downstream effectors. Activates cAMP-dependent pathway. The sequence is that of Calcitonin gene-related peptide type 1 receptor (CALCRL) from Sus scrofa (Pig).